The chain runs to 1026 residues: SWI/SNF-related matrix-associated actin-dependent regulator of chromatin subfamily A containing DEAD/H box 1 (1026 aa).

An N-acetylmethionine modification is found at M1. The segment at 1-82 (MNLFNLDRFR…DNERKASISY (82 aa)) is disordered. Residues 7 to 19 (DRFRFEKRNKIEE) are compositionally biased toward basic and acidic residues. At T54 the chain carries Phosphothreonine. S57 carries the post-translational modification Phosphoserine. Position 71 is a phosphothreonine (T71). K77 participates in a covalent cross-link: Glycyl lysine isopeptide (Lys-Gly) (interchain with G-Cter in SUMO2). S79 is modified (phosphoserine). A Glycyl lysine isopeptide (Lys-Gly) (interchain with G-Cter in SUMO2) cross-link involves residue K84. Residues S124, S127, S132, S146, and S152 each carry the phosphoserine modification. Residues 157–199 (LKDAKLQTLKELFPQRSDNDLLKLIESTSTMDGAIAAALLMFG) form the CUE 1 domain. Disordered stretches follow at residues 203-251 (GGPR…NWEK) and 302-328 (SQSE…KTKL). A phosphoserine mark is found at S211 and S214. At Y217 the chain carries Phosphotyrosine. A compositionally biased stretch (basic and acidic residues) spans 226 to 238 (QSIKKTRLDHGEE). A phosphoserine mark is found at S239 and S242. Residues 251–294 (KQESIVLKLQKEFPNFDKQELREVLKEHEWMYTEALESLKVFAE) form the CUE 2 domain. Phosphoserine is present on S302. A compositionally biased stretch (polar residues) spans 314 to 323 (SRSQNYPKNA). K335 is covalently cross-linked (Glycyl lysine isopeptide (Lys-Gly) (interchain with G-Cter in SUMO2)). Residues 354–373 (VVEDSEYDSGSDVGSSLDED) form a disordered region. K471 participates in a covalent cross-link: Glycyl lysine isopeptide (Lys-Gly) (interchain with G-Cter in SUMO2). The Helicase ATP-binding domain occupies 509 to 677 (ALVHKHGLNG…MSLLNFVMPH (169 aa)). 521–529 (ADEMGLGKT) is an ATP binding site. Residues 628–631 (DEGH) carry the DEGH box motif. The short motif at 721-738 (RRVKEEVLKQLPPKKDRI) is the Nuclear localization signal element. K724 is covalently cross-linked (Glycyl lysine isopeptide (Lys-Gly) (interchain with G-Cter in SUMO2)). The region spanning 858–1010 (VLGCILSELK…MTTVDEGDEG (153 aa)) is the Helicase C-terminal domain. 897–904 (YLRLDGKT) serves as a coordination point for ATP. K996 participates in a covalent cross-link: Glycyl lysine isopeptide (Lys-Gly) (interchain with G-Cter in SUMO2). The DEGD box signature appears at 1005 to 1008 (DEGD).

The protein belongs to the SNF2/RAD54 helicase family. Binds to DNA preferentially in the vicinity of transcriptional start sites. Interacts with MSH2 and TRIM28. Part of a complex composed of TRIM28, HDAC1, HDAC2 and EHMT2. Interacts with PCNA. Isoform 1 is expressed ubiquitously. Isoform 3 is expressed mainly in skin and esophagus. Expressed in fibroblasts and keratinocytes (at protein level).

Its subcellular location is the nucleus. The protein localises to the chromosome. It catalyses the reaction ATP + H2O = ADP + phosphate + H(+). DNA helicase that possesses intrinsic ATP-dependent nucleosome-remodeling activity and is both required for DNA repair and heterochromatin organization. Promotes DNA end resection of double-strand breaks (DSBs) following DNA damage: probably acts by weakening histone DNA interactions in nucleosomes flanking DSBs. Required for the restoration of heterochromatin organization after replication. Acts at replication sites to facilitate the maintenance of heterochromatin by directing H3 and H4 histones deacetylation, H3 'Lys-9' trimethylation (H3K9me3) and restoration of silencing. This chain is SWI/SNF-related matrix-associated actin-dependent regulator of chromatin subfamily A containing DEAD/H box 1, found in Homo sapiens (Human).